The sequence spans 242 residues: MVPLSFPFHVAELEVGQHLYWQIGNLNLHGQVFISSWVVISALLVLVITGTRKMERDPQGVQNLLEFLWDYLRDLAREQIGEKAYRDWLPFIGTLFLFIFGCNWGGALVPWKLIELPNGELGAPTADINTTVAMALLVSLSYFYAGLSRKGLRYFEYYVEPTPIMLPFKIIEDFTKPLSLSFRLFGNILADELVVGVLAFLVPILVPLPAMFLGLFTSAIQALIFATLAANYIGEAVHEEHH.

5 consecutive transmembrane segments (helical) span residues 28–48, 89–109, 128–148, 193–213, and 214–234; these read LHGQ…VLVI, LPFI…GALV, INTT…AGLS, LVVG…AMFL, and GLFT…NYIG.

This sequence belongs to the ATPase A chain family. As to quaternary structure, F-type ATPases have 2 components, CF(1) - the catalytic core - and CF(0) - the membrane proton channel. CF(1) has five subunits: alpha(3), beta(3), gamma(1), delta(1), epsilon(1). CF(0) has four main subunits: a, b, b' and c.

It is found in the plastid. The protein resides in the organellar chromatophore thylakoid membrane. In terms of biological role, key component of the proton channel; it plays a direct role in the translocation of protons across the membrane. The sequence is that of ATP synthase subunit a, organellar chromatophore from Paulinella chromatophora.